The primary structure comprises 68 residues: Large ribosomal subunit protein bL32 (68 aa).

The protein belongs to the bacterial ribosomal protein bL32 family.

The sequence is that of Large ribosomal subunit protein bL32 from Aster yellows witches'-broom phytoplasma (strain AYWB).